Consider the following 440-residue polypeptide: Muscarinic acetylcholine receptor M2 (440 aa).

Residues 1–19 (VLVAGSLSLVTIIGNILVM) form a helical membrane-spanning segment. The Cytoplasmic portion of the chain corresponds to 20–33 (VSIKVNRHLQTVNN). The chain crosses the membrane as a helical span at residues 34 to 54 (YFLFSLACADLIIGVFSMNLY). Residues 55–71 (TLYTVIGYWPLGPVVCD) lie on the Extracellular side of the membrane. A disulfide bridge links Cys70 with Cys150. The helical transmembrane segment at 72-93 (LWLALDYVVSNASVMNLLIISF) threads the bilayer. The short motif at 94–96 (DRY) is the Important for signaling element. Topologically, residues 94 to 113 (DRYFCVTKPLTYPVKRTTKM) are cytoplasmic. Residues 114–136 (AGMMIAAAWVLSFILWAPAILFW) traverse the membrane as a helical segment. Over 137-158 (QFIVGVRTVEDGECYIQFFSNA) the chain is Extracellular. Residues 159–183 (AVTFGTAIAAFYLPVIIMTVLYWHI) form a helical membrane-spanning segment. The Cytoplasmic segment spans residues 184–361 (SRASKSRIKK…PPSREKKVTR (178 aa)). Residues 192–329 (KKDKKEPVAN…VVGSSGQNGD (138 aa)) are disordered. Residue Ser206 is modified to Phosphoserine. The segment covering 228–244 (GLEHNKIQNGKAPRDPV) has biased composition (basic and acidic residues). Composition is skewed to polar residues over residues 258 to 267 (NDSTSVSAVA), 278 to 287 (DENTVSTSLG), and 308 to 327 (SDSC…SGQN). A helical transmembrane segment spans residues 362–384 (TILAILLAFIITWAPYNVMVLIN). Topologically, residues 385–392 (TFCAPCIP) are extracellular. Cys387 and Cys390 are joined by a disulfide. The chain crosses the membrane as a helical span at residues 393-416 (NTVWTIGYWLCYINSTINPACYAL). The short motif at 410 to 414 (NPACY) is the Important for signaling element. Over 417–440 (CNATFKKTFKHLLMCHYKNIGATR) the chain is Cytoplasmic. 3 positions are modified to phosphothreonine: Thr420, Thr424, and Thr439.

It belongs to the G-protein coupled receptor 1 family. Muscarinic acetylcholine receptor subfamily. CHRM2 sub-subfamily. As to quaternary structure, interacts with ARRB1 and ARRB2. Interacts with RACK1; the interaction regulates CHRM2 internalization. Post-translationally, phosphorylated in response to agonist treatment.

It is found in the cell membrane. The protein resides in the postsynaptic cell membrane. The muscarinic acetylcholine receptor mediates various cellular responses, including inhibition of adenylate cyclase, breakdown of phosphoinositides and modulation of potassium channels through the action of G proteins. Primary transducing effect is adenylate cyclase inhibition. Signaling promotes phospholipase C activity, leading to the release of inositol trisphosphate (IP3); this then triggers calcium ion release into the cytosol. The protein is Muscarinic acetylcholine receptor M2 (CHRM2) of Pan troglodytes (Chimpanzee).